The sequence spans 105 residues: Circadian clock oscillator protein KaiB (105 aa).

This sequence belongs to the KaiB family. As to quaternary structure, the KaiABC complex composition changes during the circadian cycle to control KaiC phosphorylation. Complexes KaiC(6), KaiA(2-4):KaiC(6), KaiB(6):KaiC(6) and KaiC(6):KaiB(6):KaiA(12) are among the most important forms, many form cooperatively. Undergoes a major conformational rearrangment; in the free state forms homotetramers as a dimer of dimers. When bound to the CI domain of KaiC switches to a monomeric thioredoxin-fold (KaiB(fs)). KaiB(fs) binds CikA, leading it to dephosphorylate phospho-RpaA.

Its function is as follows. Key component of the KaiABC oscillator complex, which constitutes the main circadian regulator in cyanobacteria. Complex composition changes during the circadian cycle to control KaiC phosphorylation. KaiA stimulates KaiC autophosphorylation, while KaiB sequesters KaiA, leading to KaiC autodephosphorylation. Phospho-Ser-431 KaiC accumulation triggers binding of KaiB to form the KaiB(6):KaiC(6) complex, leading to changes in output regulators CikA and SasA. KaiB switches to a thioredoxin-like fold (KaiB(fs)) when bound to KaiC. KaiB(6):KaiC(6) formation exposes a site for KaiA binding that sequesters KaiA from KaiC, making the KaiC(6):KaiB(6):KaiA(12) complex that results in KaiC autodephosphorylation. A metamorphic protein which reversibly switches between an inactive tetrameric fold and a rare, thioredoxin-like monomeric fold (KaiB(fs)). KaiB(fs) binds phospho-KaiC, KaiA and CikA. KaiA and CikA compete for binding to KaiB(fs), and KaiB(fs) and SasA compete for binding to KaiC, thus the clock oscillator and output signal pathway are tightly coupled. In Cyanothece sp. (strain PCC 7425 / ATCC 29141), this protein is Circadian clock oscillator protein KaiB.